The sequence spans 151 residues: Inorganic triphosphatase (151 aa).

The region spanning methionine 1–leucine 148 is the CYTH domain. Tyrosine 27 serves as the catalytic Proton acceptor.

In terms of assembly, homodimer.

The catalysed reaction is triphosphate + H2O = phosphate + diphosphate. Activated by magnesium and mangenese ions, and inhibited by calcium, zinc and copper ions. Involved in the hydrolysis of the beta-gamma-phosphoanhydride linkage of triphosphate-containing substrates (inorganic or nucleoside-linked). Catalyzes the hydrolysis of inorganic triphosphate (PPPi). The enzyme has a strong preference for linear PPPi compared with cyclic PPPi (cyclic trimetaphosphate) and to the linear P4. The longer chains polyphosphate are not hydrolyzed. It has only a slight thiamine triphosphatase (ThTPase) activity. Nucleoside triphosphatase activity is negligible in the presence of magnesium, but a small activity is observed in the presence of manganese, in particular with GTP. The protein is Inorganic triphosphatase of Nitrosomonas europaea (strain ATCC 19718 / CIP 103999 / KCTC 2705 / NBRC 14298).